Consider the following 134-residue polypeptide: UPF0412 protein YaaI (134 aa).

Residues 1 to 23 (MRSVLTISASLLFGLALSSVAHA) form the signal peptide.

The protein belongs to the UPF0412 family.

This Salmonella paratyphi B (strain ATCC BAA-1250 / SPB7) protein is UPF0412 protein YaaI.